The following is a 305-amino-acid chain: Ribonuclease BN (305 aa).

His64, His66, Asp68, His69, His141, Asp212, and His270 together coordinate Zn(2+). Asp68 (proton acceptor) is an active-site residue.

Belongs to the RNase Z family. RNase BN subfamily. In terms of assembly, homodimer. Requires Zn(2+) as cofactor.

Functionally, zinc phosphodiesterase, which has both exoribonuclease and endoribonuclease activities. This chain is Ribonuclease BN, found in Escherichia coli O157:H7.